We begin with the raw amino-acid sequence, 280 residues long: Dexamethasone-induced Ras-related protein 1 (280 aa).

Position 11 is an S-nitrosocysteine (Cys11). GTP is bound at residue 31–38 (GSSKVGKT). Positions 53 to 61 (YTPTIEDFH) match the Effector region motif. GTP is bound by residues 78 to 82 (DTSGN) and 145 to 148 (NKGD). Cysteine methyl ester is present on Cys277. Cys277 is lipidated: S-farnesyl cysteine. Positions 278–280 (VIS) are cleaved as a propeptide — removed in mature form.

It belongs to the small GTPase superfamily. RasD family. As to quaternary structure, forms a ternary complex with CAPON and NOS1. Component of a complex, at least composed of APBB1, RASD1/DEXRAS1 and APP. Interacts with APBB1/FE65. Forms. S-nitrosylation stimulates guanine-nucleotide exchange activity. In terms of tissue distribution, prominently found in brain at both mRNA and protein levels. Moderate expression in testis and lung. Slightly expressed in heart, spleen, skeletal muscle, liver and kidney.

The protein resides in the cell membrane. It is found in the cytoplasm. It localises to the perinuclear region. Its subcellular location is the nucleus. Functionally, small GTPase. Negatively regulates the transcription regulation activity of the APBB1/FE65-APP complex via its interaction with APBB1/FE65. The protein is Dexamethasone-induced Ras-related protein 1 (Rasd1) of Rattus norvegicus (Rat).